The primary structure comprises 231 residues: NADH-ubiquinone oxidoreductase chain 4 (231 aa).

Helical transmembrane passes span 1–21 (PIAGSMVLAAILLKLGGYGII), 34–54 (MFLPFIVLALWGAILANLTCL), 63–85 (IAYSSISHMGLVVATIIIQTPWG), 89–111 (ALALMIAHGFTSSALFCLANTTY), 128–148 (ILPMATTWWLLANLMNIAIPP), and 169–189 (TIIMLGLSMLITASYSLHMFL).

It belongs to the complex I subunit 4 family.

It localises to the mitochondrion membrane. The enzyme catalyses a ubiquinone + NADH + 5 H(+)(in) = a ubiquinol + NAD(+) + 4 H(+)(out). Core subunit of the mitochondrial membrane respiratory chain NADH dehydrogenase (Complex I) that is believed to belong to the minimal assembly required for catalysis. Complex I functions in the transfer of electrons from NADH to the respiratory chain. The immediate electron acceptor for the enzyme is believed to be ubiquinone. This Bothrocophias hyoprora (Amazonian hognose viper) protein is NADH-ubiquinone oxidoreductase chain 4 (MT-ND4).